Reading from the N-terminus, the 119-residue chain is Phosphoribosyl-AMP cyclohydrolase (119 aa).

Aspartate 72 contacts Mg(2+). Cysteine 73 serves as a coordination point for Zn(2+). Mg(2+) is bound by residues aspartate 74 and aspartate 76. Zn(2+) is bound by residues cysteine 89 and cysteine 96.

It belongs to the PRA-CH family. Homodimer. Mg(2+) is required as a cofactor. Zn(2+) serves as cofactor.

It is found in the cytoplasm. It catalyses the reaction 1-(5-phospho-beta-D-ribosyl)-5'-AMP + H2O = 1-(5-phospho-beta-D-ribosyl)-5-[(5-phospho-beta-D-ribosylamino)methylideneamino]imidazole-4-carboxamide. Its pathway is amino-acid biosynthesis; L-histidine biosynthesis; L-histidine from 5-phospho-alpha-D-ribose 1-diphosphate: step 3/9. Its function is as follows. Catalyzes the hydrolysis of the adenine ring of phosphoribosyl-AMP. This Methanocella arvoryzae (strain DSM 22066 / NBRC 105507 / MRE50) protein is Phosphoribosyl-AMP cyclohydrolase.